Here is a 658-residue protein sequence, read N- to C-terminus: Heat shock 70 kDa protein, mitochondrial (658 aa).

The segment at 629–658 (KLDSSASKSSSTENKENKDNTTEAEFTEKK) is disordered. Residues 631-640 (DSSASKSSST) are compositionally biased toward low complexity. Residues 641–658 (ENKENKDNTTEAEFTEKK) are compositionally biased toward basic and acidic residues.

The protein belongs to the heat shock protein 70 family.

Its subcellular location is the mitochondrion. Its function is as follows. May function in protein folding and assembly, and disassembly of protein complexes. The sequence is that of Heat shock 70 kDa protein, mitochondrial (mhsp70) from Dictyostelium discoideum (Social amoeba).